The primary structure comprises 188 residues: MASWLPETLFETVGQGPPPSKDYYQLLVTRSQVIFRWWKISLRSEYRSTKPGEAKETHEDFLENSHLQGQTALIFGARILDYVINLCKGKFDFLERLSDDLLLTIISYLDLEDIARLCQTSHRFAKLCMSDKLWEQIVQSTCDTITPDVRALAEDTGWRQLFFTNKLQLQRQLRKRKQKYGNLREKQP.

In terms of domain architecture, F-box spans 91 to 137 (FDFLERLSDDLLLTIISYLDLEDIARLCQTSHRFAKLCMSDKLWEQI).

As to quaternary structure, directly interacts with SKP1 and CUL1.

Its function is as follows. Substrate-recognition component of the SCF (SKP1-CUL1-F-box protein)-type E3 ubiquitin ligase complex. The protein is F-box only protein 36 (FBXO36) of Homo sapiens (Human).